Here is a 65-residue protein sequence, read N- to C-terminus: Large ribosomal subunit protein uL29 (65 aa).

Belongs to the universal ribosomal protein uL29 family.

The protein is Large ribosomal subunit protein uL29 of Methylococcus capsulatus (strain ATCC 33009 / NCIMB 11132 / Bath).